We begin with the raw amino-acid sequence, 343 residues long: Glycerol-3-phosphate dehydrogenase [NAD(P)+] (343 aa).

NADPH is bound by residues Trp29, Arg49, and Lys122. Residues Lys122, Gly150, and Ser152 each contribute to the sn-glycerol 3-phosphate site. Residue Ala154 participates in NADPH binding. 5 residues coordinate sn-glycerol 3-phosphate: Lys205, Asp258, Ser268, Arg269, and Asn270. Residue Lys205 is the Proton acceptor of the active site. Arg269 is a binding site for NADPH. The NADPH site is built by Leu288 and Glu290.

The protein belongs to the NAD-dependent glycerol-3-phosphate dehydrogenase family.

The protein resides in the cytoplasm. The catalysed reaction is sn-glycerol 3-phosphate + NAD(+) = dihydroxyacetone phosphate + NADH + H(+). It catalyses the reaction sn-glycerol 3-phosphate + NADP(+) = dihydroxyacetone phosphate + NADPH + H(+). It functions in the pathway membrane lipid metabolism; glycerophospholipid metabolism. Its function is as follows. Catalyzes the reduction of the glycolytic intermediate dihydroxyacetone phosphate (DHAP) to sn-glycerol 3-phosphate (G3P), the key precursor for phospholipid synthesis. The sequence is that of Glycerol-3-phosphate dehydrogenase [NAD(P)+] from Mesorhizobium japonicum (strain LMG 29417 / CECT 9101 / MAFF 303099) (Mesorhizobium loti (strain MAFF 303099)).